A 533-amino-acid polypeptide reads, in one-letter code: Pre-mRNA-splicing factor cwf24 (533 aa).

The segment covering 1–17 has biased composition (polar residues); the sequence is MEQKNLNINQASGSKIN. The disordered stretch occupies residues 1 to 69; the sequence is MEQKNLNINQ…MRDNIPIVSG (69 aa). The span at 27 to 43 shows a compositional bias: basic residues; sequence SRRRHRPRQGLKRKKGF. A C3H1-type zinc finger spans residues 184-212; sequence DYQPDVCKDYKLTGYCGYGDTCKFLHMRE. The RING-type zinc-finger motif lies at 254-292; the sequence is CLICKKDYRSPIATTCGHHFCEQCAITRYRKTPTCIQCG. Positions 379–524 constitute an N-acetyltransferase domain; it reads YFIREITESN…SAFYMVCPLS (146 aa).

The protein belongs to the CWC24 family. As to quaternary structure, belongs to the 40S cdc5-associated complex (or cwf complex), a spliceosome sub-complex reminiscent of a late-stage spliceosome composed of the U2, U5 and U6 snRNAs and at least brr2, cdc5, cwf2/prp3, cwf3/syf1, cwf4/syf3, cwf5/ecm2, spp42/cwf6, cwf7/spf27, cwf8, cwf9, cwf10, cwf11, cwf12, prp45/cwf13, cwf14, cwf15, cwf16, cwf17, cwf18, cwf19, cwf20, cwf21, cwf22, cwf23, cwf24, cwf25, cwf26, cyp7/cwf27, cwf28, cwf29/ist3, lea1, msl1, prp5/cwf1, prp10, prp12/sap130, prp17, prp22, sap61, sap62, sap114, sap145, slu7, smb1, smd1, smd3, smf1, smg1 and syf2.

Its subcellular location is the nucleus. Its function is as follows. Involved in mRNA splicing. The polypeptide is Pre-mRNA-splicing factor cwf24 (cwf24) (Schizosaccharomyces pombe (strain 972 / ATCC 24843) (Fission yeast)).